The sequence spans 302 residues: Sulfate adenylyltransferase subunit 2 (302 aa).

The segment at 279-302 (ERQGRAIDHDSSGSMELKKRQGYF) is disordered. Basic and acidic residues predominate over residues 280 to 302 (RQGRAIDHDSSGSMELKKRQGYF).

This sequence belongs to the PAPS reductase family. CysD subfamily. Heterodimer composed of CysD, the smaller subunit, and CysN.

It carries out the reaction sulfate + ATP + H(+) = adenosine 5'-phosphosulfate + diphosphate. It participates in sulfur metabolism; hydrogen sulfide biosynthesis; sulfite from sulfate: step 1/3. Functionally, with CysN forms the ATP sulfurylase (ATPS) that catalyzes the adenylation of sulfate producing adenosine 5'-phosphosulfate (APS) and diphosphate, the first enzymatic step in sulfur assimilation pathway. APS synthesis involves the formation of a high-energy phosphoric-sulfuric acid anhydride bond driven by GTP hydrolysis by CysN coupled to ATP hydrolysis by CysD. This Aliivibrio fischeri (strain ATCC 700601 / ES114) (Vibrio fischeri) protein is Sulfate adenylyltransferase subunit 2.